We begin with the raw amino-acid sequence, 238 residues long: Uridylate kinase (238 aa).

12–15 (KVSG) serves as a coordination point for ATP. UMP is bound at residue G54. 2 residues coordinate ATP: G55 and R59. UMP-binding positions include D74 and 135–142 (TGNPYFTT). ATP contacts are provided by T162, N163, Y168, and D171.

This sequence belongs to the UMP kinase family. In terms of assembly, homohexamer.

Its subcellular location is the cytoplasm. It catalyses the reaction UMP + ATP = UDP + ADP. The protein operates within pyrimidine metabolism; CTP biosynthesis via de novo pathway; UDP from UMP (UMPK route): step 1/1. With respect to regulation, inhibited by UTP. Functionally, catalyzes the reversible phosphorylation of UMP to UDP. This Azorhizobium caulinodans (strain ATCC 43989 / DSM 5975 / JCM 20966 / LMG 6465 / NBRC 14845 / NCIMB 13405 / ORS 571) protein is Uridylate kinase.